The following is an 89-amino-acid chain: NAD(P)H-quinone oxidoreductase subunit L (89 aa).

The next 2 membrane-spanning stretches (helical) occupy residues 29–46 (VLGGMYLFVVPLFLFYWM) and 59–79 (LFIYGLVFLFFPGMVLFAPFL).

It belongs to the complex I NdhL subunit family. NDH-1 can be composed of about 15 different subunits; different subcomplexes with different compositions have been identified which probably have different functions.

It localises to the cellular thylakoid membrane. It carries out the reaction a plastoquinone + NADH + (n+1) H(+)(in) = a plastoquinol + NAD(+) + n H(+)(out). The catalysed reaction is a plastoquinone + NADPH + (n+1) H(+)(in) = a plastoquinol + NADP(+) + n H(+)(out). In terms of biological role, NDH-1 shuttles electrons from an unknown electron donor, via FMN and iron-sulfur (Fe-S) centers, to quinones in the respiratory and/or the photosynthetic chain. The immediate electron acceptor for the enzyme in this species is believed to be plastoquinone. Couples the redox reaction to proton translocation, and thus conserves the redox energy in a proton gradient. Cyanobacterial NDH-1 also plays a role in inorganic carbon-concentration. This is NAD(P)H-quinone oxidoreductase subunit L from Prochlorococcus marinus (strain NATL1A).